The chain runs to 168 residues: Xanthine-guanine phosphoribosyltransferase (168 aa).

5-phospho-alpha-D-ribose 1-diphosphate-binding positions include 43–44 and 102–110; these read RG and DDLVDTGAT. Mg(2+) is bound at residue Asp103. Residues Asp106 and Ile149 each coordinate guanine. Residues Asp106 and Ile149 each contribute to the xanthine site. Residues 106-110 and 148-149 contribute to the GMP site; these read DTGAT and WI.

This sequence belongs to the purine/pyrimidine phosphoribosyltransferase family. XGPT subfamily. Homotetramer. The cofactor is Mg(2+).

It is found in the cell inner membrane. The enzyme catalyses GMP + diphosphate = guanine + 5-phospho-alpha-D-ribose 1-diphosphate. The catalysed reaction is XMP + diphosphate = xanthine + 5-phospho-alpha-D-ribose 1-diphosphate. It catalyses the reaction IMP + diphosphate = hypoxanthine + 5-phospho-alpha-D-ribose 1-diphosphate. It participates in purine metabolism; GMP biosynthesis via salvage pathway; GMP from guanine: step 1/1. The protein operates within purine metabolism; XMP biosynthesis via salvage pathway; XMP from xanthine: step 1/1. Purine salvage pathway enzyme that catalyzes the transfer of the ribosyl-5-phosphate group from 5-phospho-alpha-D-ribose 1-diphosphate (PRPP) to the N9 position of the 6-oxopurines guanine and xanthine to form the corresponding ribonucleotides GMP (guanosine 5'-monophosphate) and XMP (xanthosine 5'-monophosphate), with the release of PPi. To a lesser extent, also acts on hypoxanthine. The chain is Xanthine-guanine phosphoribosyltransferase from Nitrobacter winogradskyi (strain ATCC 25391 / DSM 10237 / CIP 104748 / NCIMB 11846 / Nb-255).